The chain runs to 100 residues: Large ribosomal subunit protein uL23 (100 aa).

Belongs to the universal ribosomal protein uL23 family. Part of the 50S ribosomal subunit. Contacts protein L29, and trigger factor when it is bound to the ribosome.

Its function is as follows. One of the early assembly proteins it binds 23S rRNA. One of the proteins that surrounds the polypeptide exit tunnel on the outside of the ribosome. Forms the main docking site for trigger factor binding to the ribosome. The protein is Large ribosomal subunit protein uL23 of Thermotoga neapolitana (strain ATCC 49049 / DSM 4359 / NBRC 107923 / NS-E).